A 529-amino-acid polypeptide reads, in one-letter code: Glutamyl-tRNA(Gln) amidotransferase subunit B-2, chloroplastic/mitochondrial (529 aa).

The tract at residues 17–61 (STRVSLPRGSIPPPPTSSSSSSSSSREGRRPRFFSTTTTSAERPV) is disordered.

It belongs to the GatB/GatE family. GatB subfamily. In terms of assembly, subunit of the heterotrimeric GatCAB amidotransferase (AdT) complex, composed of A, B and C subunits.

The protein resides in the mitochondrion. It localises to the plastid. It is found in the chloroplast. It catalyses the reaction L-glutamyl-tRNA(Gln) + L-glutamine + ATP + H2O = L-glutaminyl-tRNA(Gln) + L-glutamate + ADP + phosphate + H(+). Allows the formation of correctly charged Gln-tRNA(Gln) through the transamidation of misacylated Glu-tRNA(Gln) in chloroplasts and mitochondria. The reaction takes place in the presence of glutamine and ATP through an activated gamma-phospho-Glu-tRNA(Gln). The polypeptide is Glutamyl-tRNA(Gln) amidotransferase subunit B-2, chloroplastic/mitochondrial (Micromonas commoda (strain RCC299 / NOUM17 / CCMP2709) (Picoplanktonic green alga)).